The sequence spans 182 residues: Fimbrial subunit type 1 (182 aa).

Residues 1–23 (MKIKTLAIVVLSALSLSSAAALA) form the signal peptide. The cysteines at positions 44 and 84 are disulfide-linked.

This sequence belongs to the fimbrial protein family.

The protein resides in the fimbrium. This Klebsiella pneumoniae protein is Fimbrial subunit type 1.